Here is a 619-residue protein sequence, read N- to C-terminus: MIQRLIPLNRKASNFTQILEKGTSLLHYSSITEAKLSYKERLRNGIVDIKVNDAIDLFESMIQSRPLPTPIDFNRLCSAVARTKQYDLVLGFCKGMELNGIEHDMYTMTIMINCYCRKKKLLFAFSVLGRAWKLGYEPDTITFSTLVNGFCLEGRVSEAVALVDRMVEMKQRPDLVTVSTLINGLCLKGRVSEALVLIDRMVEYGFQPDEVTYGPVLNRLCKSGNSALALDLFRKMEERNIKASVVQYSIVIDSLCKDGSFDDALSLFNEMEMKGIKADVVTYSSLIGGLCNDGKWDDGAKMLREMIGRNIIPDVVTFSALIDVFVKEGKLLEAKELYNEMITRGIAPDTITYNSLIDGFCKENCLHEANQMFDLMVSKGCEPDIVTYSILINSYCKAKRVDDGMRLFREISSKGLIPNTITYNTLVLGFCQSGKLNAAKELFQEMVSRGVPPSVVTYGILLDGLCDNGELNKALEIFEKMQKSRMTLGIGIYNIIIHGMCNASKVDDAWSLFCSLSDKGVKPDVVTYNVMIGGLCKKGSLSEADMLFRKMKEDGCTPDDFTYNILIRAHLGGSGLISSVELIEEMKVCGFSADSSTIKMVIDMLSDRRLDKSFLDMLS.

A mitochondrion-targeting transit peptide spans 1-28 (MIQRLIPLNRKASNFTQILEKGTSLLHY). 15 PPR repeats span residues 69 to 103 (TPID…GIEH), 104 to 138 (DMYT…GYEP), 139 to 173 (DTIT…KQRP), 174 to 208 (DLVT…GFQP), 209 to 243 (DEVT…NIKA), 244 to 278 (SVVQ…GIKA), 279 to 313 (DVVT…NIIP), 314 to 348 (DVVT…GIAP), 349 to 383 (DTIT…GCEP), 384 to 418 (DIVT…GLIP), 419 to 453 (NTIT…GVPP), 454 to 488 (SVVT…RMTL), 489 to 523 (GIGI…GVKP), 524 to 558 (DVVT…GCTP), and 559 to 593 (DDFT…GFSA).

The protein belongs to the PPR family. P subfamily.

It is found in the mitochondrion. The protein is Pentatricopeptide repeat-containing protein At3g22470, mitochondrial of Arabidopsis thaliana (Mouse-ear cress).